Reading from the N-terminus, the 142-residue chain is Large ribosomal subunit protein uL11 (142 aa).

This sequence belongs to the universal ribosomal protein uL11 family. Part of the ribosomal stalk of the 50S ribosomal subunit. Interacts with L10 and the large rRNA to form the base of the stalk. L10 forms an elongated spine to which L12 dimers bind in a sequential fashion forming a multimeric L10(L12)X complex. Post-translationally, one or more lysine residues are methylated.

Its function is as follows. Forms part of the ribosomal stalk which helps the ribosome interact with GTP-bound translation factors. This Liberibacter asiaticus (Citrus greening disease) protein is Large ribosomal subunit protein uL11.